Consider the following 320-residue polypeptide: NAD-dependent protein deacylase SIR2rp2 (320 aa).

Residues 1-22 (MRPAGTLASFLERCSARKRGRG) constitute a mitochondrion transit peptide. The 298-residue stretch at 23 to 320 (CVVLTGAGCS…MFFRRKTIQL (298 aa)) folds into the Deacetylase sirtuin-type domain. Residues 28 to 48 (GAGCSTESGIPDYRGPNGQYH) and 108 to 111 (QNVD) contribute to the NAD(+) site. Catalysis depends on histidine 144, which acts as the Proton acceptor. Zn(2+) is bound by residues cysteine 152, cysteine 155, cysteine 207, and cysteine 210. NAD(+)-binding positions include 248 to 250 (GTS), 274 to 276 (NAG), and glycine 294.

It belongs to the sirtuin family. Class II subfamily. Zn(2+) serves as cofactor.

The protein resides in the mitochondrion matrix. It carries out the reaction N(6)-acetyl-L-lysyl-[protein] + NAD(+) + H2O = 2''-O-acetyl-ADP-D-ribose + nicotinamide + L-lysyl-[protein]. NAD-dependent protein deacylase. Catalyzes the NAD-dependent hydrolysis of acyl groups from lysine residues. The protein is NAD-dependent protein deacylase SIR2rp2 (SIR2rp2) of Leishmania major.